We begin with the raw amino-acid sequence, 595 residues long: NADPH-dependent diflavin oxidoreductase 1 (595 aa).

A Flavodoxin-like domain is found at 6 to 150 (VLVLYGSQTG…VIDPWLLSFW (145 aa)). FMN is bound by residues 12–17 (SQTGTA), 59–62 (ATTG), 97–106 (LGDSSYPKFN), and Asp-132. Residues 204–444 (LRPFPAPLVF…WVKKGSLKFP (241 aa)) form the FAD-binding FR-type domain. Residues Arg-348, 380–383 (RSFS), and 414–417 (GLCS) each bind FAD. Residues Thr-458, 513-514 (SR), and 519-523 (KVYVQ) contribute to the NADP(+) site. Trp-594 is an FAD binding site.

Belongs to the NADPH-dependent diflavin oxidoreductase NDOR1 family. This sequence in the N-terminal section; belongs to the flavodoxin family. It in the C-terminal section; belongs to the flavoprotein pyridine nucleotide cytochrome reductase family. Interacts with ciapin1; as part of the cytosolic iron-sulfur (Fe-S) protein assembly (CIA) machinery. The cofactor is FAD. FMN serves as cofactor.

Its subcellular location is the cytoplasm. It is found in the perinuclear region. It catalyses the reaction 2 oxidized [2Fe-2S]-[protein] + NADPH = 2 reduced [2Fe-2S]-[protein] + NADP(+) + H(+). Functionally, NADPH-dependent reductase which is a central component of the cytosolic iron-sulfur (Fe-S) protein assembly (CIA) machinery. Transfers electrons from NADPH via its FAD and FMN prosthetic groups to the [2Fe-2S] cluster of ciapin1, another key component of the CIA machinery. In turn, this reduced cluster provides electrons for assembly of cytosolic iron-sulfur cluster proteins. It can also reduce the [2Fe-2S] cluster of cisd1 and activate this protein implicated in Fe/S cluster repair. The sequence is that of NADPH-dependent diflavin oxidoreductase 1 from Danio rerio (Zebrafish).